The sequence spans 63 residues: Putative alpha-neurotoxin RjAa9 (63 aa).

In terms of domain architecture, LCN-type CS-alpha/beta spans 1-60 (KEGYPVDWGNCKYECMSDEYCKDLCADRKATSGYCYKLNWSCYCKGLPDDSPIKTPGKCR). Cystine bridges form between Cys11–Cys59, Cys15–Cys35, Cys21–Cys42, and Cys25–Cys44.

This sequence belongs to the long (4 C-C) scorpion toxin superfamily. Sodium channel inhibitor family. Alpha subfamily. In terms of tissue distribution, expressed by the venom gland.

Its subcellular location is the secreted. Functionally, alpha toxins bind voltage-independently at site-3 of sodium channels (Nav) and inhibits the inactivation of the activated channels, thereby blocking neuronal transmission. The sequence is that of Putative alpha-neurotoxin RjAa9 from Rhopalurus junceus (Caribbean blue scorpion).